Reading from the N-terminus, the 484-residue chain is Arachin Ahy-3 (484 aa).

Residues 1–20 form the signal peptide; it reads MAKLLALSVCFCFLVLGASS. Disulfide bonds link Cys32-Cys65 and Cys108-Cys305. The 219-residue stretch at 35–253 folds into the Cupin type-1 1 domain; it reads QRLNAQRPDN…GFQVNEDIVR (219 aa). A disordered region spans residues 208 to 233; that stretch reads QQRSGRQSPKGEEQEQEQENEGGNVF. Residues 295–298 constitute a propeptide that is removed on maturation; it reads DFNN. The 150-residue stretch at 311–460 folds into the Cupin type-1 2 domain; that stretch reads MNIGKSTSAD…SYGLQYEQAR (150 aa). A propeptide spanning residues 479–484 is cleaved from the precursor; it reads MIRTVA.

This sequence belongs to the 11S seed storage protein (globulins) family. As to quaternary structure, hexamer; each subunit is composed of an acidic and a basic chain derived from a single precursor and linked by a disulfide bond.

The chain is Arachin Ahy-3 from Arachis hypogaea (Peanut).